Consider the following 263-residue polypeptide: Undecaprenyl-diphosphatase (263 aa).

The next 8 membrane-spanning stretches (helical) occupy residues 1–21 (MSYL…FLPI), 41–61 (FTKA…LVLY), 69–89 (WGFY…GFVV), 96–116 (LMGS…ILIW), 147–167 (AIAM…GLTL), 177–197 (FSFF…LLKI), 208–228 (LLLV…KFFI), and 238–258 (GFGY…YTGH).

It belongs to the UppP family.

The protein localises to the cell inner membrane. It carries out the reaction di-trans,octa-cis-undecaprenyl diphosphate + H2O = di-trans,octa-cis-undecaprenyl phosphate + phosphate + H(+). In terms of biological role, catalyzes the dephosphorylation of undecaprenyl diphosphate (UPP). Confers resistance to bacitracin. This Bdellovibrio bacteriovorus (strain ATCC 15356 / DSM 50701 / NCIMB 9529 / HD100) protein is Undecaprenyl-diphosphatase.